A 1510-amino-acid polypeptide reads, in one-letter code: Chromosome partition protein MukB (1510 aa).

The stretch at 6-30 forms a coiled coil; sequence ELENEIELESDEVIMENENVEEIVD. Position 75-82 (75-82) interacts with ATP; it reads GGNGAGKS. Coiled-coil stretches lie at residues 346 to 506, 553 to 633, 673 to 706, 821 to 847, 876 to 1064, 1094 to 1149, and 1249 to 1305; these read QHRL…HKMS, QQTP…NLTA, MQSQ…RLSQ, RAAR…QIAF, EELM…IQLQ, ERAR…RELV, and DAIE…QNIS. A flexible hinge region spans residues 707–824; the sequence is PDGSEDPRLN…EIPLFGRAAR (118 aa).

It belongs to the SMC family. MukB subfamily. As to quaternary structure, homodimerization via its hinge domain. Binds to DNA via its C-terminal region. Interacts, and probably forms a ternary complex, with MukE and MukF via its C-terminal region. The complex formation is stimulated by calcium or magnesium. Interacts with tubulin-related protein FtsZ.

It is found in the cytoplasm. The protein resides in the nucleoid. Functionally, plays a central role in chromosome condensation, segregation and cell cycle progression. Functions as a homodimer, which is essential for chromosome partition. Involved in negative DNA supercoiling in vivo, and by this means organize and compact chromosomes. May achieve or facilitate chromosome segregation by condensation DNA from both sides of a centrally located replisome during cell division. The polypeptide is Chromosome partition protein MukB (Haemophilus influenzae (strain 86-028NP)).